The chain runs to 260 residues: MKKADAPSSEPPELKALWESWLADLGWQPSEQQQQQLQQLYPLVMAGNRTQNLTRITDPIDFWEKHLWDSLRGLRLLGSWEAIQAQPWRGIDIGTGAGFPGIPAQIALPQTRFTLLDSTQRKIAFVQDILQRLSLTQARAVAQRAEIWGQDPQERGSYDIALARALASAEICAEYCLPLLKVGGRAILYRGHWTEAEAQTLEQALELLGGKLIHVEAFTTPRSRGVRHCLLLEKVAPTPPPYPRSPGTPKRQPLGQSNRP.

Residues G94, F99, 117–119, 145–146, and R164 each bind S-adenosyl-L-methionine; these read DST and AE. Residues 236 to 260 form a disordered region; that stretch reads APTPPPYPRSPGTPKRQPLGQSNRP. Residues 237–246 show a composition bias toward pro residues; sequence PTPPPYPRSP.

This sequence belongs to the methyltransferase superfamily. RNA methyltransferase RsmG family.

Its subcellular location is the cytoplasm. In terms of biological role, specifically methylates the N7 position of a guanine in 16S rRNA. The chain is Ribosomal RNA small subunit methyltransferase G from Synechococcus sp. (strain JA-2-3B'a(2-13)) (Cyanobacteria bacterium Yellowstone B-Prime).